Reading from the N-terminus, the 427-residue chain is ATP-dependent RNA helicase DDX39A (427 aa).

The segment covering 1–19 (MAEQDVENELLDYDEDEEP) has biased composition (acidic residues). Residues 1 to 36 (MAEQDVENELLDYDEDEEPQAPQESTPAPPKKDVKG) are disordered. An N-acetylalanine modification is found at alanine 2. Residue lysine 31 forms a Glycyl lysine isopeptide (Lys-Gly) (interchain with G-Cter in SUMO2) linkage. Lysine 35 carries the N6-acetyllysine; alternate modification. Lysine 35 participates in a covalent cross-link: Glycyl lysine isopeptide (Lys-Gly) (interchain with G-Cter in SUMO2); alternate. A Phosphoserine modification is found at serine 37. A Q motif motif is present at residues 44 to 72 (SGFRDFLLKPELLRAIVDCGFEHPSEVQH). The Helicase ATP-binding domain occupies 75–248 (IPQAILGMDV…RKFMQDPMEV (174 aa)). Residue 88–95 (AKSGMGKT) coordinates ATP. Residues lysine 154 and lysine 162 each participate in a glycyl lysine isopeptide (Lys-Gly) (interchain with G-Cter in SUMO2) cross-link. A Phosphothreonine modification is found at threonine 171. Positions 195–198 (DECD) match the DECD box motif. Glycyl lysine isopeptide (Lys-Gly) (interchain with G-Cter in SUMO2) cross-links involve residues lysine 240 and lysine 255. The 162-residue stretch at 260–421 (GLQQYYVKLK…ELPEEIDIST (162 aa)) folds into the Helicase C-terminal domain. Serine 426 carries the post-translational modification Phosphoserine.

It belongs to the DEAD box helicase family. DECD subfamily. Binds ALYREF/THOC4 and DDX39B/BAT1. Interacts with the apo-AREX complex component SARNP. Interacts with MX1. Interacts with MCM3AP isoform GANP. Interacts with ECD. Interacts with PHAX; this interaction stimulates PHAX RNA binding activity. Post-translationally, SUMOylated by RANBP2; SUMOylation modification affects its ability to bind RNA.

The protein localises to the nucleus. It is found in the cytoplasm. It carries out the reaction ATP + H2O = ADP + phosphate + H(+). Helicase that plays an essential role in mRNA export and is involved in multiple steps in RNA metabolism including alternative splicing. Regulates nuclear mRNA export to the cytoplasm through association with ECD. Also involved in spliceosomal uridine-rich small nuclear RNA (U snRNA) export by stimulating the RNA binding of adapter PHAX. Plays a role in the negative regulation of type I IFN production by increasing the nuclear retention of antiviral transcripts and thus reducing their protein expression. Independently of the interferon pathway, plays an antiviral role against alphaviruses by binding to a 5' conserved sequence element in the viral genomic RNA. The sequence is that of ATP-dependent RNA helicase DDX39A from Mus musculus (Mouse).